Here is a 134-residue protein sequence, read N- to C-terminus: UPF0412 protein YaaI (134 aa).

The first 23 residues, 1 to 23, serve as a signal peptide directing secretion; that stretch reads MRSVLTISVGLLFGLALSSVAHA.

Belongs to the UPF0412 family.

This Salmonella paratyphi A (strain ATCC 9150 / SARB42) protein is UPF0412 protein YaaI.